The following is a 378-amino-acid chain: Tetraacyldisaccharide 4'-kinase (378 aa).

63–70 lines the ATP pocket; it reads AVGGAGKT.

Belongs to the LpxK family.

The catalysed reaction is a lipid A disaccharide + ATP = a lipid IVA + ADP + H(+). It participates in glycolipid biosynthesis; lipid IV(A) biosynthesis; lipid IV(A) from (3R)-3-hydroxytetradecanoyl-[acyl-carrier-protein] and UDP-N-acetyl-alpha-D-glucosamine: step 6/6. Its function is as follows. Transfers the gamma-phosphate of ATP to the 4'-position of a tetraacyldisaccharide 1-phosphate intermediate (termed DS-1-P) to form tetraacyldisaccharide 1,4'-bis-phosphate (lipid IVA). This is Tetraacyldisaccharide 4'-kinase from Anaeromyxobacter sp. (strain K).